We begin with the raw amino-acid sequence, 501 residues long: Beta-secretase 1 (501 aa).

Residues methionine 1 to glycine 21 form the signal peptide. The propeptide occupies threonine 22–arginine 45. The Extracellular portion of the chain corresponds to threonine 22–threonine 457. Residues leucine 39–glycine 58 form a disordered region. Residues tyrosine 75–alanine 416 form the Peptidase A1 domain. Aspartate 93 is an active-site residue. Lysine 126 is subject to N6-acetyllysine. N-linked (GlcNAc...) asparagine glycans are attached at residues asparagine 153, asparagine 172, and asparagine 223. 3 disulfide bridges follow: cysteine 216-cysteine 420, cysteine 278-cysteine 443, and cysteine 330-cysteine 380. N6-acetyllysine occurs at positions 275, 279, and 285. The active site involves aspartate 289. N6-acetyllysine is present on residues lysine 299, lysine 300, and lysine 307. A glycan (N-linked (GlcNAc...) asparagine) is linked at asparagine 354. A helical membrane pass occupies residues isoleucine 458 to cysteine 478. S-palmitoyl cysteine attachment occurs at residues cysteine 474, cysteine 478, cysteine 482, and cysteine 485. The Cytoplasmic segment spans residues glutamine 479–lysine 501. The segment at glutamine 479 to lysine 501 is interaction with RTN3. The DXXLL motif lies at aspartate 496 to leucine 500. Phosphoserine is present on serine 498. A Glycyl lysine isopeptide (Lys-Gly) (interchain with G-Cter in ubiquitin) cross-link involves residue lysine 501.

Belongs to the peptidase A1 family. Monomer. Interacts (via DXXLL motif) with GGA1, GGA2 and GGA3 (via their VHS domain); the interaction highly increases when BACE1 is phosphorylated at Ser-498. Interacts with RTN1; RTN2; RTN3 and RTN4; the interaction leads to inhibition of amyloid precursor protein processing. Interacts with SNX6. Interacts with PCSK9. Interacts with NAT8 and NAT8B. Interacts with BIN1. Interacts (via extracellular domain) with ADAM10 (via extracellular domain). Interacts with SORL1; this interaction may affect binding with APP and hence reduce APP cleavage. Interacts with NRDC AND NRG1. N-Glycosylated. Addition of a bisecting N-acetylglucosamine by MGAT3 blocks lysosomal targeting, further degradation and is required for maintaining stability under stress conditions. Post-translationally, palmitoylation mediates lipid raft localization. In terms of processing, acetylated in the endoplasmic reticulum at Lys-126, Lys-275, Lys-279, Lys-285, Lys-299, Lys-300 and Lys-307. Acetylation by NAT8 and NAT8B is transient and deacetylation probably occurs in the Golgi. Acetylation regulates the maturation, the transport to the plasma membrane, the stability and the expression of the protein. Ubiquitinated at Lys-501, ubiquitination leads to lysosomal degradation. Monoubiquitinated and 'Lys-63'-linked polyubitinated. Deubiquitnated by USP8; inhibits lysosomal degradation. Post-translationally, phosphorylation at Ser-498 is required for interaction with GGA1 and retrograded transport from endosomal compartments to the trans-Golgi network. Non-phosphorylated BACE1 enters a direct recycling route to the cell surface. As to expression, expressed in the brain, specifically in neurons and astrocytes (at protein level).

The protein resides in the cell membrane. It is found in the golgi apparatus. It localises to the trans-Golgi network. The protein localises to the endoplasmic reticulum. Its subcellular location is the endosome. The protein resides in the late endosome. It is found in the early endosome. It localises to the cell surface. The protein localises to the cytoplasmic vesicle membrane. Its subcellular location is the membrane raft. The protein resides in the lysosome. It is found in the recycling endosome. It localises to the cell projection. The protein localises to the axon. Its subcellular location is the dendrite. The enzyme catalyses Broad endopeptidase specificity. Cleaves Glu-Val-Asn-Leu-|-Asp-Ala-Glu-Phe in the Swedish variant of Alzheimer's amyloid precursor protein.. Its activity is regulated as follows. Inhibited by RTN3 and RTN4. Responsible for the proteolytic processing of the amyloid precursor protein (APP). Cleaves at the N-terminus of the A-beta peptide sequence, between residues 671 and 672 of APP, leads to the generation and extracellular release of beta-cleaved soluble APP, and a corresponding cell-associated C-terminal fragment which is later released by gamma-secretase. Cleaves CHL1. The polypeptide is Beta-secretase 1 (Mus musculus (Mouse)).